Here is a 745-residue protein sequence, read N- to C-terminus: Probable endochitinase ARB_07371 (745 aa).

The first 23 residues, 1 to 23, serve as a signal peptide directing secretion; the sequence is MALPKTIMAFIAFISFLVSTTFA. Positions 30–351 constitute a GH18 domain; sequence TNVVTYWGQG…SNIKRLLLNN (322 aa). The active-site Proton donor is E178. Disordered stretches follow at residues 351–372 and 395–446; these read NDPS…SMST and WSMP…TTEI. Residues 357-372 show a composition bias toward low complexity; sequence TTTSKTMSSTKTSMST. N-linked (GlcNAc...) asparagine glycans are attached at residues N438 and N484. The interval 651–715 is disordered; it reads SEPMTPTQVP…EMGGNGGDRT (65 aa). G720 is lipidated: GPI-anchor amidated glycine. Residues 721–745 constitute a propeptide, removed in mature form; sequence GAGVVSPSFSVVVIVLGSIVYHIMQ.

It belongs to the glycosyl hydrolase 18 family. Chitinase class III subfamily.

It localises to the cell membrane. It is found in the secreted. The protein localises to the cell wall. It carries out the reaction Random endo-hydrolysis of N-acetyl-beta-D-glucosaminide (1-&gt;4)-beta-linkages in chitin and chitodextrins.. Its function is as follows. GPI-anchored chitinase involved in the degradation of chitin, a component of the cell walls of fungi and exoskeletal elements of some animals (including worms and arthropods). Required to reshape the cell wall at the sites where cell wall remodeling and/or cell wall maturation actively take place such as sites of conidia formation. This chain is Probable endochitinase ARB_07371, found in Arthroderma benhamiae (strain ATCC MYA-4681 / CBS 112371) (Trichophyton mentagrophytes).